The primary structure comprises 375 residues: 23S rRNA (uracil(747)-C(5))-methyltransferase RlmC (375 aa).

[4Fe-4S] cluster-binding residues include Cys-3, Cys-11, Cys-14, and Cys-87. Residues Gln-212, Phe-241, Glu-262, and Asn-307 each contribute to the S-adenosyl-L-methionine site. Cys-334 acts as the Nucleophile in catalysis.

It belongs to the class I-like SAM-binding methyltransferase superfamily. RNA M5U methyltransferase family. RlmC subfamily.

It carries out the reaction uridine(747) in 23S rRNA + S-adenosyl-L-methionine = 5-methyluridine(747) in 23S rRNA + S-adenosyl-L-homocysteine + H(+). Catalyzes the formation of 5-methyl-uridine at position 747 (m5U747) in 23S rRNA. This chain is 23S rRNA (uracil(747)-C(5))-methyltransferase RlmC, found in Shigella boydii serotype 4 (strain Sb227).